The primary structure comprises 962 residues: UPF0182 protein SACE_1102 (962 aa).

The next 7 helical transmembrane spans lie at 10–30 (ILLILGGVVLIALIAGSRLLG), 55–75 (LGLGVAAGAFVGVVLLLNLWI), 106–126 (LFGWGIPIVIAVIAGLTAQSD), 168–188 (FVAITVGFIGALVTHYIFGGI), 203–223 (IQLSVLAGLFVLLKAVDYFLD), 250–270 (VKLILMIIAVFCALAFFAAIF), and 279–299 (IATVLLVLSSILVGSVWPALL). Disordered stretches follow at residues 707–730 (RTFWEVPPDPTSSGQGGSNQGNQQ) and 876–916 (FGPG…EMTK). Residues 899-910 (GQQPPTQQPPAG) are compositionally biased toward pro residues.

The protein belongs to the UPF0182 family.

It is found in the cell membrane. The polypeptide is UPF0182 protein SACE_1102 (Saccharopolyspora erythraea (strain ATCC 11635 / DSM 40517 / JCM 4748 / NBRC 13426 / NCIMB 8594 / NRRL 2338)).